Reading from the N-terminus, the 229-residue chain is Sorting nexin-10A (229 aa).

The region spanning 11–128 is the PX domain; the sequence is FISVWVRDPQ…HLFLQSQLSI (118 aa). Residues arginine 54 and arginine 95 each contribute to the a 1,2-diacyl-sn-glycero-3-phospho-(1D-myo-inositol-3-phosphate) site.

Belongs to the sorting nexin family.

It is found in the cytoplasm. It localises to the endosome membrane. Its subcellular location is the cytoskeleton. The protein resides in the microtubule organizing center. The protein localises to the centrosome. Its function is as follows. Probable phosphoinositide-binding protein involved in protein sorting and membrane trafficking in endosomes. May play a role in cilium biogenesis through regulation of the transport and the localization of proteins to the cilium. The protein is Sorting nexin-10A (snx10a) of Danio rerio (Zebrafish).